Here is a 255-residue protein sequence, read N- to C-terminus: Ly6/PLAUR domain-containing protein 8 (255 aa).

An N-terminal signal peptide occupies residues 1–20 (MRGVFIAGVIAAFAITVVDS). 13 N-linked (GlcNAc...) asparagine glycosylation sites follow: Asn-22, Asn-30, Asn-53, Asn-72, Asn-76, Asn-105, Asn-115, Asn-128, Asn-154, Asn-169, Asn-179, Asn-200, and Asn-210. The region spanning 121-170 (CMSCYGHNKTLCEEKPQKCYEGEQCVFIIAEMVNGSGRVELKGCSDISNS) is the UPAR/Ly6 domain. Residue Ser-233 is the site of GPI-anchor amidated serine attachment. Positions 234–255 (MGTKASFTSSIFGSLLLLKLLF) are cleaved as a propeptide — removed in mature form.

The protein belongs to the CNF-like-inhibitor family. Highly N-glycosylated. Not O-glycosylated. Post-translationally, GPI-anchored. The GPI-anchor is cleaved, leading to secretion into the colonic lumen. In terms of tissue distribution, specifically present in enterocytes located at the uppermost epithelial layer of the colon (at protein level). Exclusively expressed in the large intestine: specifically expressed on the apical surface of epithelial cells located at the uppermost layer of the colonic gland.

The protein resides in the cell membrane. It localises to the secreted. Its function is as follows. Secreted protein specifically required to prevent invasion of Gram-negative bacteria in the inner mucus layer of the colon epithelium, a portion of the large intestine which is free of commensal microbiota. Prevents invasion of flagellated microbiota by binding to the flagellum of bacteria, such as P.mirabilis, thereby inhibiting bacterial motility in the intestinal lumen. Segregation of intestinal bacteria and epithelial cells in the colon is required to preserve intestinal homeostasis. This Mus musculus (Mouse) protein is Ly6/PLAUR domain-containing protein 8.